Consider the following 352-residue polypeptide: tRNA N6-adenosine threonylcarbamoyltransferase (352 aa).

Residues H109 and H113 each contribute to the Fe cation site. Residues 136–140, D169, G182, D186, and N284 contribute to the substrate site; that span reads TVSGG. Position 312 (D312) interacts with Fe cation.

The protein belongs to the KAE1 / TsaD family. It depends on Fe(2+) as a cofactor.

The protein localises to the cytoplasm. It catalyses the reaction L-threonylcarbamoyladenylate + adenosine(37) in tRNA = N(6)-L-threonylcarbamoyladenosine(37) in tRNA + AMP + H(+). Required for the formation of a threonylcarbamoyl group on adenosine at position 37 (t(6)A37) in tRNAs that read codons beginning with adenine. Is involved in the transfer of the threonylcarbamoyl moiety of threonylcarbamoyl-AMP (TC-AMP) to the N6 group of A37, together with TsaE and TsaB. TsaD likely plays a direct catalytic role in this reaction. This Chloroherpeton thalassium (strain ATCC 35110 / GB-78) protein is tRNA N6-adenosine threonylcarbamoyltransferase.